A 306-amino-acid chain; its full sequence is Homoserine O-acetyltransferase (306 aa).

The Acyl-thioester intermediate role is filled by cysteine 142. Positions 163 and 192 each coordinate substrate. The Proton acceptor role is filled by histidine 235. Glutamate 237 is a catalytic residue. Arginine 249 is a substrate binding site.

Belongs to the MetA family.

Its subcellular location is the cytoplasm. It carries out the reaction L-homoserine + acetyl-CoA = O-acetyl-L-homoserine + CoA. The protein operates within amino-acid biosynthesis; L-methionine biosynthesis via de novo pathway; O-acetyl-L-homoserine from L-homoserine: step 1/1. Its function is as follows. Transfers an acetyl group from acetyl-CoA to L-homoserine, forming acetyl-L-homoserine. In Brevibacillus brevis (strain 47 / JCM 6285 / NBRC 100599), this protein is Homoserine O-acetyltransferase.